Consider the following 354-residue polypeptide: AT-hook motif nuclear-localized protein 11 (354 aa).

2 disordered regions span residues 1 to 158 and 290 to 354; these read MDRR…MMPS and KREE…LMRG. Low complexity-rich tracts occupy residues 46–55 and 75–96; these read NSISPFGSNP and VDSS…PPSG. The short motif at 101–109 is the Bipartite nuclear localization signal element; that stretch reads KRKRGRPRK. A DNA-binding region (a.T hook 1) is located at residues 101–113; that stretch reads KRKRGRPRKYGQD. Residues 122-133 are compositionally biased toward low complexity; the sequence is SPSISNVSPNSN. Residues 134–146 constitute a DNA-binding region (a.T hook 2); it reads KRGRGRPPGSGKK. In terms of domain architecture, PPC spans 159 to 302; it reads STGMSFTPHV…ETSEDVQDTD (144 aa). Over residues 294-303 the composition is skewed to acidic residues; that stretch reads TSEDVQDTDA. A compositionally biased stretch (polar residues) spans 304–327; the sequence is LENNNDNTAATSPPVPQQSQNIVQ. A compositionally biased stretch (basic and acidic residues) spans 340–354; sequence MDMHHPHMDIDLMRG.

The protein resides in the nucleus. Its function is as follows. Transcription factor that specifically binds AT-rich DNA sequences related to the nuclear matrix attachment regions (MARs). The protein is AT-hook motif nuclear-localized protein 11 of Arabidopsis thaliana (Mouse-ear cress).